The following is a 281-amino-acid chain: Pantothenate synthetase (281 aa).

Residue 30-37 (MGNLHQGH) coordinates ATP. The active-site Proton donor is histidine 37. (R)-pantoate is bound at residue glutamine 61. Glutamine 61 is a beta-alanine binding site. Residue 149–152 (GNKD) coordinates ATP. A (R)-pantoate-binding site is contributed by glutamine 155. ATP contacts are provided by residues isoleucine 178 and 186 to 189 (MSSR).

Belongs to the pantothenate synthetase family. In terms of assembly, homodimer.

It is found in the cytoplasm. It catalyses the reaction (R)-pantoate + beta-alanine + ATP = (R)-pantothenate + AMP + diphosphate + H(+). Its pathway is cofactor biosynthesis; (R)-pantothenate biosynthesis; (R)-pantothenate from (R)-pantoate and beta-alanine: step 1/1. In terms of biological role, catalyzes the condensation of pantoate with beta-alanine in an ATP-dependent reaction via a pantoyl-adenylate intermediate. The polypeptide is Pantothenate synthetase (Shewanella baltica (strain OS195)).